A 265-amino-acid polypeptide reads, in one-letter code: Methyl-coenzyme M reductase II subunit gamma (265 aa).

Arginine 123 lines the coenzyme M pocket.

The protein belongs to the methyl-coenzyme M reductase gamma subunit family. As to quaternary structure, MCR is a hexamer of two alpha, two beta, and two gamma chains, forming a dimer of heterotrimers. The cofactor is coenzyme F430.

The enzyme catalyses coenzyme B + methyl-coenzyme M = methane + coenzyme M-coenzyme B heterodisulfide. It participates in one-carbon metabolism; methyl-coenzyme M reduction; methane from methyl-coenzyme M: step 1/1. Functionally, component of the methyl-coenzyme M reductase (MCR) I that catalyzes the reductive cleavage of methyl-coenzyme M (CoM-S-CH3 or 2-(methylthio)ethanesulfonate) using coenzyme B (CoB or 7-mercaptoheptanoylthreonine phosphate) as reductant which results in the production of methane and the mixed heterodisulfide of CoB and CoM (CoM-S-S-CoB). This is the final step in methanogenesis. This Methanothermobacter thermautotrophicus (strain ATCC 29096 / DSM 1053 / JCM 10044 / NBRC 100330 / Delta H) (Methanobacterium thermoautotrophicum) protein is Methyl-coenzyme M reductase II subunit gamma (mrtG).